Consider the following 544-residue polypeptide: U1 small nuclear ribonucleoprotein component PRP42 (544 aa).

HAT repeat units lie at residues 7-39 (LIHD…YIVK), 51-83 (QLLK…LEYK), 85-118 (GNVS…FCNN), 121-156 (SHQK…QISS), and 163-195 (KYWN…DIMD). Residues 230–235 (KKKLKK) carry the Nuclear localization signal motif. 4 HAT repeats span residues 255 to 288 (FESK…YTIT), 290 to 322 (QTDS…WLIN), 366 to 397 (NLLE…FKTF), and 456 to 488 (VEKN…LIYF).

In terms of assembly, component of the 18S U1 snRNP particle, a subcomplex of the spliceosome.

It is found in the nucleus. Its function is as follows. Essential component of the U1 snRNP particle, which recognizes and binds the 5'-splice site of pre-mRNA. Together with other non-snRNP factors, U1 snRNP forms the spliceosomal commitment complex, that targets pre-mRNA to the splicing pathway. U1 snRNP is cotranscriptionally recruited to intron-containing genes. Required for U1 snRNP biogenesis. This is U1 small nuclear ribonucleoprotein component PRP42 (PRP42) from Saccharomyces cerevisiae (strain ATCC 204508 / S288c) (Baker's yeast).